Here is a 320-residue protein sequence, read N- to C-terminus: ATP-dependent 6-phosphofructokinase (320 aa).

Gly12 is a binding site for ATP. ADP is bound by residues 22-26 (RGVVR) and 55-60 (RYSVSD). Residues 73 to 74 (RF) and 103 to 106 (GDGS) contribute to the ATP site. Asp104 is a binding site for Mg(2+). Position 126-128 (126-128 (TID)) interacts with substrate. The Proton acceptor role is filled by Asp128. Arg155 is an ADP binding site. Substrate is bound by residues Arg163 and 170 to 172 (MGR). ADP is bound by residues 186–188 (GCE), Lys212, and 214–216 (KKH). Substrate-binding positions include Glu223, Arg244, and 250 to 253 (HIQR).

Belongs to the phosphofructokinase type A (PFKA) family. ATP-dependent PFK group I subfamily. Prokaryotic clade 'B1' sub-subfamily. As to quaternary structure, homotetramer. It depends on Mg(2+) as a cofactor.

The protein resides in the cytoplasm. It carries out the reaction beta-D-fructose 6-phosphate + ATP = beta-D-fructose 1,6-bisphosphate + ADP + H(+). Its pathway is carbohydrate degradation; glycolysis; D-glyceraldehyde 3-phosphate and glycerone phosphate from D-glucose: step 3/4. Allosterically activated by ADP and other diphosphonucleosides, and allosterically inhibited by phosphoenolpyruvate. Functionally, catalyzes the phosphorylation of D-fructose 6-phosphate to fructose 1,6-bisphosphate by ATP, the first committing step of glycolysis. The polypeptide is ATP-dependent 6-phosphofructokinase (Enterobacter cloacae).